Here is a 451-residue protein sequence, read N- to C-terminus: Tubulin gamma-1 chain (451 aa).

Phosphoserine; by BRSK1 is present on serine 131. 142–148 (AGGTGSG) contacts GTP.

This sequence belongs to the tubulin family. As to quaternary structure, component of the gamma-tubulin ring complex (gTuRC) consisting of TUBGCP2, TUBGCP3, TUBGCP4, TUBGCP5 and TUBGCP6 and gamma-tubulin TUBG1 or TUBG2. TUBGCP2, TUBGCP3, TUBGCP4, TUBGCP5 and TUBGCP6 assemble in a 5:5:2:1:1 stoichiometry; each is associated with a gamma-tubulin, thereby arranging 14 gamma-tubulins in a helical manner. Gamma-tubulin at the first position is blocked by TUBGCP3 at the last position, allowing 13 protafilaments to grow into a microtubule. The gTuRC (via TUBGCP3 and TUBGCP6) interacts with ACTB and MZT1; the interactions form a luminal bridge that stabilizes the initial structure during complex assembly. The gTuRC (via TUBGCP2) interacts with MZT2A/MZT2B and CDK5RAP2 (via CM1 motif); the interactions play a role in gTuRC activation. Interacts with alpha-beta tubulin heterodimers; the interaction allows microtubules to nucleate from the gTuRC. Interacts with B9D2. Interacts with CDK5RAP2; the interaction is leading to centrosomal localization of TUBG1 and CDK5RAP2. Interacts with CIMAP3. Interacts with SAS6 and NUP62 at the centrosome. Interacts with EML3 (phosphorylated at 'Thr-881') and HAUS8. Interacts with DNM2; this interaction may participate in centrosome cohesion. Interacts with CCDC66. Post-translationally, phosphorylation at Ser-131 by BRSK1 regulates centrosome duplication, possibly by mediating relocation of gamma-tubulin and its associated proteins from the cytoplasm to the centrosome.

The protein localises to the cytoplasm. It localises to the cytoskeleton. Its subcellular location is the microtubule organizing center. The protein resides in the centrosome. It is found in the spindle. Tubulin is the major constituent of microtubules, protein filaments consisting of alpha- and beta-tubulin heterodimers. Gamma-tubulin is a key component of the gamma-tubulin ring complex (gTuRC) which mediates microtubule nucleation. The gTuRC regulates the minus-end nucleation of alpha-beta tubulin heterodimers that grow into microtubule protafilaments, a critical step in centrosome duplication and spindle formation. In Mus musculus (Mouse), this protein is Tubulin gamma-1 chain.